The primary structure comprises 126 residues: UPF0538 protein C2orf76 (126 aa).

It belongs to the UPF0538 family.

The polypeptide is UPF0538 protein C2orf76 (C2orf76) (Homo sapiens (Human)).